Here is a 305-residue protein sequence, read N- to C-terminus: tRNA dimethylallyltransferase 1 (305 aa).

10-17 is an ATP binding site; that stretch reads GPTASGKT. 12 to 17 contributes to the substrate binding site; sequence TASGKT. Positions 35-38 are interaction with substrate tRNA; it reads DSRQ.

Belongs to the IPP transferase family. Monomer. Mg(2+) serves as cofactor.

The catalysed reaction is adenosine(37) in tRNA + dimethylallyl diphosphate = N(6)-dimethylallyladenosine(37) in tRNA + diphosphate. Catalyzes the transfer of a dimethylallyl group onto the adenine at position 37 in tRNAs that read codons beginning with uridine, leading to the formation of N6-(dimethylallyl)adenosine (i(6)A). This chain is tRNA dimethylallyltransferase 1, found in Syntrophus aciditrophicus (strain SB).